A 234-amino-acid chain; its full sequence is MTKRVALEPAFILHRRPYSNTSLILELLTPNHGRVCALARSARGLKSRYKGKLELFSPLLISWSGRSDLKFLGDVEANGMPYLLEGEALLCGFYLNELLIRLLHHDDPYLRLFHHYQNTLEKLVNGRLEATLRCFEKQLLDELGYGLPLSCDVEMKLPFKPDQFYQYLPDRGFLLCEKSEESEERDVFSGKSLLALQEESFSDESSLKEIKYLMRLTLNRLLGKKPLKTRELLF.

Belongs to the RecO family.

Its function is as follows. Involved in DNA repair and RecF pathway recombination. The chain is DNA repair protein RecO from Coxiella burnetii (strain RSA 331 / Henzerling II).